Reading from the N-terminus, the 296-residue chain is 4-hydroxybenzoate octaprenyltransferase (296 aa).

8 helical membrane-spanning segments follow: residues 28 to 48, 51 to 71, 102 to 122, 143 to 163, 174 to 194, 212 to 232, 233 to 253, and 274 to 294; these read IGTL…SDGI, LAVL…GCVI, LLLT…LNHL, FFPI…PMAF, AWIL…VYAM, FGRY…LLMA, VLGA…IVLL, and FLAN…HTFF.

Belongs to the UbiA prenyltransferase family. The cofactor is Mg(2+).

It localises to the cell inner membrane. It carries out the reaction all-trans-octaprenyl diphosphate + 4-hydroxybenzoate = 4-hydroxy-3-(all-trans-octaprenyl)benzoate + diphosphate. It functions in the pathway cofactor biosynthesis; ubiquinone biosynthesis. In terms of biological role, catalyzes the prenylation of para-hydroxybenzoate (PHB) with an all-trans polyprenyl group. Mediates the second step in the final reaction sequence of ubiquinone-8 (UQ-8) biosynthesis, which is the condensation of the polyisoprenoid side chain with PHB, generating the first membrane-bound Q intermediate 3-octaprenyl-4-hydroxybenzoate. The protein is 4-hydroxybenzoate octaprenyltransferase of Neisseria gonorrhoeae (strain NCCP11945).